A 149-amino-acid polypeptide reads, in one-letter code: Putative sugar phosphate isomerase YwlF (149 aa).

His-9 serves as a coordination point for substrate. The Proton acceptor role is filled by Cys-66. A substrate-binding site is contributed by Gly-67–Met-72. The Proton donor role is filled by His-99. Arg-133 serves as a coordination point for substrate.

Belongs to the LacAB/RpiB family.

This chain is Putative sugar phosphate isomerase YwlF (ywlF), found in Bacillus subtilis (strain 168).